A 289-amino-acid chain; its full sequence is Protease HtpX homolog (289 aa).

The next 2 helical transmembrane spans lie at 11–31 (AALF…IGAG) and 36–54 (APIW…YGYW). H138 lines the Zn(2+) pocket. The active site involves E139. Residue H142 coordinates Zn(2+). The next 2 membrane-spanning stretches (helical) occupy residues 153-173 (VAAA…FFGG) and 182-202 (LAMI…QMAI). E207 contacts Zn(2+).

This sequence belongs to the peptidase M48B family. Zn(2+) serves as cofactor.

It is found in the cell membrane. This is Protease HtpX homolog from Pseudarthrobacter chlorophenolicus (strain ATCC 700700 / DSM 12829 / CIP 107037 / JCM 12360 / KCTC 9906 / NCIMB 13794 / A6) (Arthrobacter chlorophenolicus).